The sequence spans 381 residues: Chaperone protein DnaJ (381 aa).

One can recognise a J domain in the interval 5-70; it reads DFYEVLGVSR…QKKAAYDQYG (66 aa). The CR-type zinc finger occupies 136 to 214; sequence GVSKEIEVPT…CHGQGRKQKT (79 aa). Zn(2+)-binding residues include Cys-149, Cys-152, Cys-166, Cys-169, Cys-188, Cys-191, Cys-202, and Cys-205. 4 CXXCXGXG motif repeats span residues 149–156, 166–173, 188–195, and 202–209; these read CDTCEGTG, CGTCHGHG, CPTCHGKG, and CNVCHGQG.

It belongs to the DnaJ family. As to quaternary structure, homodimer. Zn(2+) is required as a cofactor.

It is found in the cytoplasm. Its function is as follows. Participates actively in the response to hyperosmotic and heat shock by preventing the aggregation of stress-denatured proteins and by disaggregating proteins, also in an autonomous, DnaK-independent fashion. Unfolded proteins bind initially to DnaJ; upon interaction with the DnaJ-bound protein, DnaK hydrolyzes its bound ATP, resulting in the formation of a stable complex. GrpE releases ADP from DnaK; ATP binding to DnaK triggers the release of the substrate protein, thus completing the reaction cycle. Several rounds of ATP-dependent interactions between DnaJ, DnaK and GrpE are required for fully efficient folding. Also involved, together with DnaK and GrpE, in the DNA replication of plasmids through activation of initiation proteins. This is Chaperone protein DnaJ from Vibrio vulnificus (strain CMCP6).